Reading from the N-terminus, the 137-residue chain is Protein E6 (137 aa).

Zinc fingers lie at residues 17–53 (CLWC…CTIC) and 90–127 (CCYC…CYDC).

Belongs to the papillomaviridae E6 protein family. In terms of assembly, forms homodimers. Interacts with ubiquitin-protein ligase UBE3A/E6-AP; this interaction stimulates UBE3A ubiquitin activity. Interacts with host BAK1. Interacts with human FBLN1.

It is found in the host cytoplasm. The protein localises to the host nucleus. In terms of biological role, plays a major role in the induction and maintenance of cellular transformation. E6 associates with host UBE3A/E6-AP ubiquitin-protein ligase and modulates its activity. Protects host keratinocytes from apoptosis by mediating the degradation of host BAK1. May also inhibit host immune response. The chain is Protein E6 from Bos taurus (Bovine).